Reading from the N-terminus, the 613-residue chain is Vitamin B12 transporter BtuB (613 aa).

Positions 1–22 are cleaved as a signal peptide; it reads MQKSLLAIAMASLLTPISYLHA. The TonB box motif lies at 29 to 36; that stretch reads DTVVVTAN. One can recognise a TBDR plug domain in the interval 41-154; the sequence is VESSVLASIS…IGGVIHIKTI (114 aa). Residues 159-613 enclose the TBDR beta-barrel domain; the sequence is QTKHDANLGY…NWFATVNYRF (455 aa). The short motif at 591 to 613 is the TonB C-terminal box element; sequence HSSGGKYYVGEGRNWFATVNYRF.

Belongs to the TonB-dependent receptor family. BtuB (TC 1.B.14.3.1) subfamily.

The protein localises to the cell outer membrane. Involved in the active translocation of vitamin B12 (cyanocobalamin) across the outer membrane to the periplasmic space. It derives its energy for transport by interacting with the trans-periplasmic membrane protein TonB. The chain is Vitamin B12 transporter BtuB from Vibrio vulnificus (strain YJ016).